Reading from the N-terminus, the 157-residue chain is MAYTVTSANQLVYLGSVWADPLELQNLCTSALGNQFQTQQARTTVQQQFSDVWKTIPTATVRFPATGFKVFRYNAVLDSLVSALLGAFDTRNRIIEVENPQNPTTAETLDATRRVDDATVAIRASISNLMNELVRGTGNYNQALFESVSGLTWATTP.

A2 bears the N-acetylalanine; by host mark.

It belongs to the virgaviridae capsid protein family.

Its subcellular location is the virion. Capsid protein self-assembles to form rod-shaped virions about 18 nm in diameter with a central canal enclosing the viral genomic RNA. The sequence is that of Capsid protein (CP) from Capsicum (peppers).